The primary structure comprises 329 residues: Quinone-oxidoreductase QR1, chloroplastic (329 aa).

This sequence belongs to the zinc-containing alcohol dehydrogenase family. Quinone oxidoreductase subfamily.

It is found in the plastid. The protein resides in the chloroplast outer membrane. The enzyme catalyses 2 a quinone + NADPH + H(+) = 2 a 1,4-benzosemiquinone + NADP(+). With respect to regulation, inhibited by dicumarol. Functionally, NADPH-dependent single-electron reducing quinone reductase. Involved in haustorium initiation in parasitic plants through redox cycling of exogenous haustorium-inducing factors. Can use 9,10-phenanthrenequinone (PAQ), 1,2-naphthoquinone, 5-hydroxy-1,4-naphthoquinone (juglone) and 2,6-dimethoxy-p-benzoquinone (DMBQ) as substrates, but has no activity with menadione, diamide, 2,3-dimethoxy-5-methyl-1,4-benzoquinone or 1,4-naphthoquinone. This Triphysaria versicolor (Yellow owl's clover) protein is Quinone-oxidoreductase QR1, chloroplastic.